We begin with the raw amino-acid sequence, 131 residues long: UPF0102 protein YraN (131 aa).

Residues 1–19 show a composition bias toward polar residues; that stretch reads MATVPTRSGSPRQLTTKQT. A disordered region spans residues 1 to 21; the sequence is MATVPTRSGSPRQLTTKQTGD.

This sequence belongs to the UPF0102 family.

The protein is UPF0102 protein YraN of Escherichia coli O45:K1 (strain S88 / ExPEC).